The following is a 371-amino-acid chain: 3-isopropylmalate dehydrogenase (371 aa).

At Thr55 the chain carries Phosphothreonine. 78–89 (GPEWTNPNCRPE) is an NAD(+) binding site. The substrate site is built by Arg96, Arg106, Arg135, and Asp224. Mg(2+) contacts are provided by Asp224, Asp249, and Asp253. NAD(+) is bound at residue 290 to 302 (GSAPDIAGKGIVN).

Belongs to the isocitrate and isopropylmalate dehydrogenases family. In terms of assembly, homodimer. Mg(2+) serves as cofactor. Mn(2+) is required as a cofactor.

It is found in the cytoplasm. The enzyme catalyses (2R,3S)-3-isopropylmalate + NAD(+) = 4-methyl-2-oxopentanoate + CO2 + NADH. It participates in amino-acid biosynthesis; L-leucine biosynthesis; L-leucine from 3-methyl-2-oxobutanoate: step 3/4. Functionally, catalyzes the oxidation of 3-carboxy-2-hydroxy-4-methylpentanoate (3-isopropylmalate) to 3-carboxy-4-methyl-2-oxopentanoate. The product decarboxylates to 4-methyl-2 oxopentanoate. This chain is 3-isopropylmalate dehydrogenase (leu1), found in Schizosaccharomyces pombe (strain 972 / ATCC 24843) (Fission yeast).